Consider the following 160-residue polypeptide: uncharacterized protein (160 aa).

This sequence belongs to the Dps family.

This is an uncharacterized protein from Haemophilus influenzae (strain ATCC 51907 / DSM 11121 / KW20 / Rd).